Consider the following 628-residue polypeptide: uncharacterized protein (628 aa).

Belongs to the ATP-dependent AMP-binding enzyme family.

This is an uncharacterized protein from Pseudomonas aeruginosa (strain ATCC 15692 / DSM 22644 / CIP 104116 / JCM 14847 / LMG 12228 / 1C / PRS 101 / PAO1).